The chain runs to 445 residues: 23S rRNA (uracil(1939)-C(5))-methyltransferase RlmD (445 aa).

Residues M1–S21 form a disordered region. Residues R5–E64 enclose the TRAM domain. [4Fe-4S] cluster contacts are provided by C77, C83, C86, and C165. S-adenosyl-L-methionine contacts are provided by Q275, F304, N309, E325, D352, and D373. Residue C399 is the Nucleophile of the active site.

Belongs to the class I-like SAM-binding methyltransferase superfamily. RNA M5U methyltransferase family. RlmD subfamily.

The catalysed reaction is uridine(1939) in 23S rRNA + S-adenosyl-L-methionine = 5-methyluridine(1939) in 23S rRNA + S-adenosyl-L-homocysteine + H(+). In terms of biological role, catalyzes the formation of 5-methyl-uridine at position 1939 (m5U1939) in 23S rRNA. This chain is 23S rRNA (uracil(1939)-C(5))-methyltransferase RlmD, found in Alcanivorax borkumensis (strain ATCC 700651 / DSM 11573 / NCIMB 13689 / SK2).